A 378-amino-acid polypeptide reads, in one-letter code: Small RNA 2'-O-methyltransferase (378 aa).

Aspartate 61 serves as a coordination point for S-adenosyl-L-methionine. Glutamate 114, glutamate 117, histidine 118, and histidine 176 together coordinate Mg(2+).

The protein belongs to the methyltransferase superfamily. HEN1 family. Requires Mg(2+) as cofactor.

Its subcellular location is the cytoplasm. It carries out the reaction small RNA 3'-end nucleotide + S-adenosyl-L-methionine = small RNA 3'-end 2'-O-methylnucleotide + S-adenosyl-L-homocysteine + H(+). Methyltransferase that adds a 2'-O-methyl group at the 3'-end of small RNAs. The protein is Small RNA 2'-O-methyltransferase of Schizosaccharomyces pombe (strain 972 / ATCC 24843) (Fission yeast).